A 642-amino-acid chain; its full sequence is Threonine--tRNA ligase (642 aa).

One can recognise a TGS domain in the interval 1-61; that stretch reads MPVITLPDGS…ETDAELSIIT (61 aa). Residues 243–534 are catalytic; the sequence is DHRKIGKQLD…LIEEYAGRFP (292 aa). Residues C334, H385, and H511 each coordinate Zn(2+).

This sequence belongs to the class-II aminoacyl-tRNA synthetase family. Homodimer. Zn(2+) is required as a cofactor.

It is found in the cytoplasm. It catalyses the reaction tRNA(Thr) + L-threonine + ATP = L-threonyl-tRNA(Thr) + AMP + diphosphate + H(+). In terms of biological role, catalyzes the attachment of threonine to tRNA(Thr) in a two-step reaction: L-threonine is first activated by ATP to form Thr-AMP and then transferred to the acceptor end of tRNA(Thr). Also edits incorrectly charged L-seryl-tRNA(Thr). The polypeptide is Threonine--tRNA ligase (Shewanella baltica (strain OS155 / ATCC BAA-1091)).